The sequence spans 145 residues: Cuticle protein 7 (145 aa).

One can recognise a Chitin-binding type R&amp;R domain in the interval 41–114; the sequence is PVNVATSYHA…VASNALPVGP (74 aa).

This is Cuticle protein 7 from Blaberus craniifer (Death's head cockroach).